The following is a 104-amino-acid chain: Large ribosomal subunit protein bL21 (104 aa).

The protein belongs to the bacterial ribosomal protein bL21 family. Part of the 50S ribosomal subunit. Contacts protein L20.

This protein binds to 23S rRNA in the presence of protein L20. The sequence is that of Large ribosomal subunit protein bL21 from Caldanaerobacter subterraneus subsp. tengcongensis (strain DSM 15242 / JCM 11007 / NBRC 100824 / MB4) (Thermoanaerobacter tengcongensis).